The chain runs to 79 residues: Dolichyl-diphosphooligosaccharide--protein glycosyltransferase subunit TMEM258 (79 aa).

The next 2 membrane-spanning stretches (helical) occupy residues V17–F37 and L55–V75.

It belongs to the OST5 family. As to quaternary structure, component of the oligosaccharyltransferase (OST) complex.

The protein resides in the membrane. Its subcellular location is the endoplasmic reticulum. It localises to the cytoplasm. It functions in the pathway protein modification; protein glycosylation. Subunit of the oligosaccharyl transferase (OST) complex that catalyzes the initial transfer of a defined glycan (Glc(3)Man(9)GlcNAc(2) in eukaryotes) from the lipid carrier dolichol-pyrophosphate to an asparagine residue within an Asn-X-Ser/Thr consensus motif in nascent polypeptide chains, the first step in protein N-glycosylation. N-glycosylation occurs cotranslationally and the complex associates with the Sec61 complex at the channel-forming translocon complex that mediates protein translocation across the endoplasmic reticulum (ER). All subunits are required for a maximal enzyme activity. This is Dolichyl-diphosphooligosaccharide--protein glycosyltransferase subunit TMEM258 from Gallus gallus (Chicken).